The sequence spans 215 residues: tRNA (guanine-N(7)-)-methyltransferase (215 aa).

S-adenosyl-L-methionine is bound by residues Glu-43, Glu-68, Asp-95, and Asp-117. Residue Asp-117 is part of the active site. Substrate contacts are provided by residues Lys-121, Asp-153, and 190–193 (TEYE).

This sequence belongs to the class I-like SAM-binding methyltransferase superfamily. TrmB family.

It carries out the reaction guanosine(46) in tRNA + S-adenosyl-L-methionine = N(7)-methylguanosine(46) in tRNA + S-adenosyl-L-homocysteine. Its pathway is tRNA modification; N(7)-methylguanine-tRNA biosynthesis. Its function is as follows. Catalyzes the formation of N(7)-methylguanine at position 46 (m7G46) in tRNA. The sequence is that of tRNA (guanine-N(7)-)-methyltransferase from Staphylococcus epidermidis (strain ATCC 35984 / DSM 28319 / BCRC 17069 / CCUG 31568 / BM 3577 / RP62A).